The sequence spans 196 residues: Potassium-transporting ATPase KdpC subunit (196 aa).

The helical transmembrane segment at 17–37 (LLLLVATAGLGLVYPLAVFAV) threads the bilayer. A disordered region spans residues 73 to 93 (QPRPSAAGDGYDPTASGASNL).

The protein belongs to the KdpC family. The system is composed of three essential subunits: KdpA, KdpB and KdpC.

Its subcellular location is the cell membrane. Functionally, part of the high-affinity ATP-driven potassium transport (or Kdp) system, which catalyzes the hydrolysis of ATP coupled with the electrogenic transport of potassium into the cytoplasm. This subunit acts as a catalytic chaperone that increases the ATP-binding affinity of the ATP-hydrolyzing subunit KdpB by the formation of a transient KdpB/KdpC/ATP ternary complex. This is Potassium-transporting ATPase KdpC subunit from Kineococcus radiotolerans (strain ATCC BAA-149 / DSM 14245 / SRS30216).